Reading from the N-terminus, the 786-residue chain is Endonuclease MutS2 (786 aa).

Glycine 335–threonine 342 is an ATP binding site. One can recognise a Smr domain in the interval leucine 711–lysine 786.

It belongs to the DNA mismatch repair MutS family. MutS2 subfamily. As to quaternary structure, homodimer. Binds to stalled ribosomes, contacting rRNA.

In terms of biological role, endonuclease that is involved in the suppression of homologous recombination and thus may have a key role in the control of bacterial genetic diversity. Functionally, acts as a ribosome collision sensor, splitting the ribosome into its 2 subunits. Detects stalled/collided 70S ribosomes which it binds and splits by an ATP-hydrolysis driven conformational change. Acts upstream of the ribosome quality control system (RQC), a ribosome-associated complex that mediates the extraction of incompletely synthesized nascent chains from stalled ribosomes and their subsequent degradation. Probably generates substrates for RQC. The polypeptide is Endonuclease MutS2 (Bacillus cereus (strain ATCC 10987 / NRS 248)).